Consider the following 188-residue polypeptide: Peptide deformylase (188 aa).

The Fe cation site is built by Cys-107 and His-149. Glu-150 is a catalytic residue. His-153 serves as a coordination point for Fe cation.

Belongs to the polypeptide deformylase family. Fe(2+) serves as cofactor.

The catalysed reaction is N-terminal N-formyl-L-methionyl-[peptide] + H2O = N-terminal L-methionyl-[peptide] + formate. Functionally, removes the formyl group from the N-terminal Met of newly synthesized proteins. Requires at least a dipeptide for an efficient rate of reaction. N-terminal L-methionine is a prerequisite for activity but the enzyme has broad specificity at other positions. The polypeptide is Peptide deformylase (Thermosynechococcus vestitus (strain NIES-2133 / IAM M-273 / BP-1)).